The following is a 271-amino-acid chain: Proteasome inhibitor PI31 subunit (271 aa).

A2 carries the post-translational modification N-acetylalanine. An important for homodimerization and interaction with FBXO7 region spans residues 2–150 (AGLEVLFASA…PIHEQWEKAN (149 aa)). S153 bears the Phosphoserine mark. R205 bears the Omega-N-methylarginine mark. The residue at position 219 (R219) is an Asymmetric dimethylarginine. The tract at residues 222–271 (IDPSSGLPNRLPPGAVPPGARFDPFGPIGTSPPGPNPDHLPPPGYDDMYL) is disordered. The residue at position 231 (R231) is an Omega-N-methylarginine. The span at 251–265 (TSPPGPNPDHLPPPG) shows a compositional bias: pro residues. S252 is subject to Phosphoserine.

Belongs to the proteasome inhibitor PI31 family. In terms of assembly, monomer and homodimer. Interacts with FBXO7. Interacts with the 20S proteasome.

The protein localises to the cytoplasm. It is found in the endoplasmic reticulum. Its function is as follows. Plays an important role in control of proteasome function. Inhibits the hydrolysis of protein and peptide substrates by the 20S proteasome. Also inhibits the activation of the proteasome by the proteasome regulatory proteins PA700 and PA28. This chain is Proteasome inhibitor PI31 subunit (PSMF1), found in Homo sapiens (Human).